A 310-amino-acid chain; its full sequence is Malate dehydrogenase (310 aa).

NAD(+)-binding positions include 7-12 (GAGNVG) and Asp-32. Substrate contacts are provided by Arg-81 and Arg-87. Residues Asn-94 and 117 to 119 (VSN) contribute to the NAD(+) site. Substrate-binding residues include Asn-119 and Arg-150. The active-site Proton acceptor is the His-174.

This sequence belongs to the LDH/MDH superfamily. MDH type 3 family. Homotetramer; arranged as a dimer of dimers.

The catalysed reaction is (S)-malate + NAD(+) = oxaloacetate + NADH + H(+). Functionally, catalyzes the reversible oxidation of malate to oxaloacetate. The sequence is that of Malate dehydrogenase from Chlorobaculum tepidum (strain ATCC 49652 / DSM 12025 / NBRC 103806 / TLS) (Chlorobium tepidum).